A 696-amino-acid polypeptide reads, in one-letter code: Probable transporter efuK (696 aa).

The segment at 603-642 (SLNGGKMQGASDAKSKVEQGQRAMRKQDEQNGSKWEPVFF) is disordered. The span at 615 to 633 (AKSKVEQGQRAMRKQDEQN) shows a compositional bias: basic and acidic residues.

It belongs to the OSBP family.

Functionally, probable transporter; part of the gene cluster that mediates the biosynthesis of enfumafungin, a glycosylated fernene-type triterpenoid with potent antifungal activity, mediated by its interaction with beta-1,3-glucan synthase and the fungal cell wall. Might be involved in transport of enfumafungin to and across organelle membranes. The protein is Probable transporter efuK of Hormonema carpetanum.